A 428-amino-acid chain; its full sequence is Histidine--tRNA ligase (428 aa).

Belongs to the class-II aminoacyl-tRNA synthetase family. In terms of assembly, homodimer.

It localises to the cytoplasm. The catalysed reaction is tRNA(His) + L-histidine + ATP = L-histidyl-tRNA(His) + AMP + diphosphate + H(+). The sequence is that of Histidine--tRNA ligase from Lactobacillus helveticus (strain DPC 4571).